The sequence spans 86 residues: Translation initiation factor IF-1 (86 aa).

One can recognise an S1-like domain in the interval 1–72 (MPKDDVIKME…TKGRIVYRKK (72 aa)).

This sequence belongs to the IF-1 family. In terms of assembly, component of the 30S ribosomal translation pre-initiation complex which assembles on the 30S ribosome in the order IF-2 and IF-3, IF-1 and N-formylmethionyl-tRNA(fMet); mRNA recruitment can occur at any time during PIC assembly.

The protein localises to the cytoplasm. Functionally, one of the essential components for the initiation of protein synthesis. Stabilizes the binding of IF-2 and IF-3 on the 30S subunit to which N-formylmethionyl-tRNA(fMet) subsequently binds. Helps modulate mRNA selection, yielding the 30S pre-initiation complex (PIC). Upon addition of the 50S ribosomal subunit IF-1, IF-2 and IF-3 are released leaving the mature 70S translation initiation complex. This is Translation initiation factor IF-1 from Pseudothermotoga lettingae (strain ATCC BAA-301 / DSM 14385 / NBRC 107922 / TMO) (Thermotoga lettingae).